We begin with the raw amino-acid sequence, 544 residues long: Chaperonin GroEL 2 (544 aa).

ATP-binding positions include 29–32 (TLGP), 86–90 (DGTTT), glycine 413, 482–484 (NVL), and aspartate 498.

Belongs to the chaperonin (HSP60) family. Forms a cylinder of 14 subunits composed of two heptameric rings stacked back-to-back. Interacts with the co-chaperonin GroES.

The protein localises to the cytoplasm. It catalyses the reaction ATP + H2O + a folded polypeptide = ADP + phosphate + an unfolded polypeptide.. In terms of biological role, together with its co-chaperonin GroES, plays an essential role in assisting protein folding. The GroEL-GroES system forms a nano-cage that allows encapsulation of the non-native substrate proteins and provides a physical environment optimized to promote and accelerate protein folding. The chain is Chaperonin GroEL 2 from Roseiflexus sp. (strain RS-1).